The sequence spans 133 residues: Nickel-responsive regulator (133 aa).

Ni(2+)-binding residues include H76, H87, H89, and C95.

It belongs to the transcriptional regulatory CopG/NikR family. As to quaternary structure, homotetramer. It depends on Ni(2+) as a cofactor.

Functionally, transcriptional repressor of the nikABCDE operon. Is active in the presence of excessive concentrations of intracellular nickel. The polypeptide is Nickel-responsive regulator (Escherichia fergusonii (strain ATCC 35469 / DSM 13698 / CCUG 18766 / IAM 14443 / JCM 21226 / LMG 7866 / NBRC 102419 / NCTC 12128 / CDC 0568-73)).